Reading from the N-terminus, the 394-residue chain is NAD(P)H-quinone oxidoreductase subunit H (394 aa).

It belongs to the complex I 49 kDa subunit family. As to quaternary structure, NDH-1 can be composed of about 15 different subunits; different subcomplexes with different compositions have been identified which probably have different functions.

It localises to the cellular thylakoid membrane. The enzyme catalyses a plastoquinone + NADH + (n+1) H(+)(in) = a plastoquinol + NAD(+) + n H(+)(out). The catalysed reaction is a plastoquinone + NADPH + (n+1) H(+)(in) = a plastoquinol + NADP(+) + n H(+)(out). Its function is as follows. NDH-1 shuttles electrons from an unknown electron donor, via FMN and iron-sulfur (Fe-S) centers, to quinones in the respiratory and/or the photosynthetic chain. The immediate electron acceptor for the enzyme in this species is believed to be plastoquinone. Couples the redox reaction to proton translocation, and thus conserves the redox energy in a proton gradient. Cyanobacterial NDH-1 also plays a role in inorganic carbon-concentration. In Prochlorococcus marinus (strain MIT 9313), this protein is NAD(P)H-quinone oxidoreductase subunit H.